A 148-amino-acid chain; its full sequence is Large ribosomal subunit protein bL9 (148 aa).

This sequence belongs to the bacterial ribosomal protein bL9 family.

Functionally, binds to the 23S rRNA. In Macrococcus caseolyticus (strain JCSC5402) (Macrococcoides caseolyticum), this protein is Large ribosomal subunit protein bL9.